We begin with the raw amino-acid sequence, 38 residues long: Photosystem II reaction center protein L (38 aa).

The helical transmembrane segment at 17–37 (SLYWGLLLIFVLAILFSSYIF) threads the bilayer.

Belongs to the PsbL family. As to quaternary structure, PSII is composed of 1 copy each of membrane proteins PsbA, PsbB, PsbC, PsbD, PsbE, PsbF, PsbH, PsbI, PsbJ, PsbK, PsbL, PsbM, PsbT, PsbX, PsbY, PsbZ, Psb30/Ycf12, at least 3 peripheral proteins of the oxygen-evolving complex and a large number of cofactors. It forms dimeric complexes.

The protein resides in the plastid. It is found in the chloroplast thylakoid membrane. Functionally, one of the components of the core complex of photosystem II (PSII). PSII is a light-driven water:plastoquinone oxidoreductase that uses light energy to abstract electrons from H(2)O, generating O(2) and a proton gradient subsequently used for ATP formation. It consists of a core antenna complex that captures photons, and an electron transfer chain that converts photonic excitation into a charge separation. This subunit is found at the monomer-monomer interface and is required for correct PSII assembly and/or dimerization. The protein is Photosystem II reaction center protein L of Mesostigma viride (Green alga).